The primary structure comprises 351 residues: Fructose-1,6-bisphosphatase class 1 1 (351 aa).

Mg(2+) is bound by residues Glu-84, Asp-106, Leu-108, and Asp-109. Residues 109–112 and Asn-205 contribute to the substrate site; that span reads DGSS. A Mg(2+)-binding site is contributed by Glu-277.

This sequence belongs to the FBPase class 1 family. In terms of assembly, homotetramer. It depends on Mg(2+) as a cofactor.

It is found in the cytoplasm. It carries out the reaction beta-D-fructose 1,6-bisphosphate + H2O = beta-D-fructose 6-phosphate + phosphate. The protein operates within carbohydrate biosynthesis; Calvin cycle. The chain is Fructose-1,6-bisphosphatase class 1 1 from Methylibium petroleiphilum (strain ATCC BAA-1232 / LMG 22953 / PM1).